Consider the following 132-residue polypeptide: Keratin, high-sulfur matrix protein, IIIA3 (132 aa).

Functionally, the keratin products of mammalian epidermal derivatives such as wool and hair consist of microfibrils embedded in a rigid matrix of other proteins. The matrix proteins include the high-sulfur and high-tyrosine keratins, having molecular weights of 6-20 kDa, whereas the microfibrils contain the larger, low-sulfur keratins (40-56 kDa). In Capra hircus (Goat), this protein is Keratin, high-sulfur matrix protein, IIIA3.